Consider the following 312-residue polypeptide: Ribonuclease Z (312 aa).

Residues H63, H65, D67, H68, H140, D211, and H269 each contribute to the Zn(2+) site. The active-site Proton acceptor is D67.

It belongs to the RNase Z family. Homodimer. It depends on Zn(2+) as a cofactor.

It carries out the reaction Endonucleolytic cleavage of RNA, removing extra 3' nucleotides from tRNA precursor, generating 3' termini of tRNAs. A 3'-hydroxy group is left at the tRNA terminus and a 5'-phosphoryl group is left at the trailer molecule.. Zinc phosphodiesterase, which displays some tRNA 3'-processing endonuclease activity. Probably involved in tRNA maturation, by removing a 3'-trailer from precursor tRNA. In Shouchella clausii (strain KSM-K16) (Alkalihalobacillus clausii), this protein is Ribonuclease Z.